Reading from the N-terminus, the 724-residue chain is Pre-mRNA-splicing factor CLF1 (724 aa).

HAT repeat units lie at residues 55–87, 89–121, 123–155, 157–188, 190–221, 223–262, 264–298, 308–340, 352–386, 396–432, 434–465, 467–499, 501–534, 536–567, 585–626, and 635–667; these read EFQA…WEAS, NEYE…MELK, RNIN…LEEL, LNVS…LEER, NELD…FEED, GQPD…METR, KEFE…FEKQ, TVLG…LEED, VEPM…LWLQ, KDYD…FEIR, LDVS…LEMR, REFD…VESA, EDFE…FEAG, GERE…MEIA, GDAD…EHGD, and DMLP…DDEK. The interval 681–724 is disordered; sequence QAWAQQRAGQGEEGGLSYDLPSDSESENEDEDGDNREEEGMDQD. A compositionally biased stretch (acidic residues) spans 702–724; that stretch reads SDSESENEDEDGDNREEEGMDQD.

The protein belongs to the crooked-neck family. As to quaternary structure, associated with the spliceosome.

The protein localises to the nucleus. Involved in pre-mRNA splicing and cell cycle progression. Required for the spliceosome assembly and initiation of the DNA replication. The chain is Pre-mRNA-splicing factor CLF1 (CLF1) from Cryptococcus neoformans var. grubii serotype A (strain H99 / ATCC 208821 / CBS 10515 / FGSC 9487) (Filobasidiella neoformans var. grubii).